Consider the following 139-residue polypeptide: MKKGVLLNADVSAVVSRLGHTDQIVICDAGLPIPAATQRIDLALTQGVPTFLQVLGVVTQEMQVESAILAEEIVKQNPQLHRALLAQLTELGQHQGNTISVSYISHSAFKAQTEHSRAVIRSGECSPYANVILCAGVTF.

H20 acts as the Proton donor in catalysis. Substrate-binding positions include D28, H106, and 128-130; that span reads YAN.

Belongs to the RbsD / FucU family. RbsD subfamily. Homodecamer.

The protein resides in the cytoplasm. It catalyses the reaction beta-D-ribopyranose = beta-D-ribofuranose. It participates in carbohydrate metabolism; D-ribose degradation; D-ribose 5-phosphate from beta-D-ribopyranose: step 1/2. Its function is as follows. Catalyzes the interconversion of beta-pyran and beta-furan forms of D-ribose. This is D-ribose pyranase from Serratia proteamaculans (strain 568).